The sequence spans 235 residues: Octanoyltransferase (235 aa).

The BPL/LPL catalytic domain maps to 28–203; the sequence is GRAEETLLLL…PFAGLPADAL (176 aa). Residues 66 to 73, 133 to 135, and 146 to 148 each bind substrate; these read RGGDVTWH, SIG, and GFA. Residue Cys-164 is the Acyl-thioester intermediate of the active site. The interval 202–235 is disordered; it reads ALPEQPRDAVQPSSCDDVHAPSTTSRRPPCPLTV.

It belongs to the LipB family.

It is found in the cytoplasm. The catalysed reaction is octanoyl-[ACP] + L-lysyl-[protein] = N(6)-octanoyl-L-lysyl-[protein] + holo-[ACP] + H(+). Its pathway is protein modification; protein lipoylation via endogenous pathway; protein N(6)-(lipoyl)lysine from octanoyl-[acyl-carrier-protein]: step 1/2. Its function is as follows. Catalyzes the transfer of endogenously produced octanoic acid from octanoyl-acyl-carrier-protein onto the lipoyl domains of lipoate-dependent enzymes. Lipoyl-ACP can also act as a substrate although octanoyl-ACP is likely to be the physiological substrate. The chain is Octanoyltransferase from Geobacter sulfurreducens (strain ATCC 51573 / DSM 12127 / PCA).